A 295-amino-acid chain; its full sequence is MSSINERPQDPSSALEQATQDVANLKSEFHHIMDEMQVADKTLVSSREQYLREDYVLHKLVKQHGSLTKDPKEGSITETVEKEMKRCGDLQQQKCILANTALYLVTKHLSKIKANIESLEEDGLLAPLDDELSDKKAGSVDLGAGIAGLGNGTAGSGSSSGRKRPASSSSANGKGQKRKQQKKERSRSHQRAGTVSRDVSPNAGIGRDPTFDALAYNDDLFKMNQGGEEDDKQLYCFCQRVSYGEMVACDGPNCKYEWFHYSCVNLTEPPKGQWYCPECRLEIANQKLNKKKKKQ.

Residues 151–208 (NGTAGSGSSSGRKRPASSSSANGKGQKRKQQKKERSRSHQRAGTVSRDVSPNAGIGRD) form a disordered region. Residues 156–171 (SGSSSGRKRPASSSSA) are compositionally biased toward low complexity. A compositionally biased stretch (basic residues) spans 175–190 (GQKRKQQKKERSRSHQ). The segment at 233–282 (QLYCFCQRVSYGEMVACDGPNCKYEWFHYSCVNLTEPPKGQWYCPECRLE) adopts a PHD-type zinc-finger fold. Residues Cys-236, Cys-238, Cys-249, Cys-254, His-260, Cys-263, Cys-276, and Cys-279 each contribute to the Zn(2+) site.

The protein belongs to the ING family. Interacts with H3K4me3 and to a lesser extent with H3K4me2. Component of the NuA4 histone acetyltransferase complex.

Its subcellular location is the nucleus. Functionally, component of the NuA4 histone acetyltransferase complex which is involved in transcriptional activation of selected genes principally by acetylation of nucleosomal histone H4 and H2A. The NuA4 complex is also involved in DNA repair. Involved in cell cycle progression and meiosis. In Kluyveromyces lactis (strain ATCC 8585 / CBS 2359 / DSM 70799 / NBRC 1267 / NRRL Y-1140 / WM37) (Yeast), this protein is Chromatin modification-related protein YNG2 (YNG2).